Consider the following 405-residue polypeptide: Probable tRNA sulfurtransferase (405 aa).

The THUMP domain occupies 60–165; that stretch reads ETIDQRLKLV…QDAIYISNQL (106 aa). Residues 183 to 184, 208 to 209, arginine 265, glycine 287, and glutamine 296 contribute to the ATP site; these read ML and HF.

This sequence belongs to the ThiI family.

It is found in the cytoplasm. It carries out the reaction [ThiI sulfur-carrier protein]-S-sulfanyl-L-cysteine + a uridine in tRNA + 2 reduced [2Fe-2S]-[ferredoxin] + ATP + H(+) = [ThiI sulfur-carrier protein]-L-cysteine + a 4-thiouridine in tRNA + 2 oxidized [2Fe-2S]-[ferredoxin] + AMP + diphosphate. It catalyses the reaction [ThiS sulfur-carrier protein]-C-terminal Gly-Gly-AMP + S-sulfanyl-L-cysteinyl-[cysteine desulfurase] + AH2 = [ThiS sulfur-carrier protein]-C-terminal-Gly-aminoethanethioate + L-cysteinyl-[cysteine desulfurase] + A + AMP + 2 H(+). Its pathway is cofactor biosynthesis; thiamine diphosphate biosynthesis. In terms of biological role, catalyzes the ATP-dependent transfer of a sulfur to tRNA to produce 4-thiouridine in position 8 of tRNAs, which functions as a near-UV photosensor. Also catalyzes the transfer of sulfur to the sulfur carrier protein ThiS, forming ThiS-thiocarboxylate. This is a step in the synthesis of thiazole, in the thiamine biosynthesis pathway. The sulfur is donated as persulfide by IscS. The chain is Probable tRNA sulfurtransferase from Lactobacillus johnsonii (strain CNCM I-12250 / La1 / NCC 533).